The following is an 857-amino-acid chain: KH domain-containing protein HEN4 (857 aa).

Positions 1 to 15 (MERNSVKFHAEKRSG) are enriched in basic and acidic residues. The segment at 1–27 (MERNSVKFHAEKRSGAFDPGSGFGSSK) is disordered. KH domains lie at 46–110 (HAAF…KLGA), 149–217 (TVVC…LVSI), 451–521 (DVVF…IMLI), and 541–610 (SITA…IFHI). Residues 644-755 (SDNPLSIGSH…RGLSDASGGL (112 aa)) form a disordered region. Polar residues-rich tracts occupy residues 645 to 665 (DNPL…NSSS) and 673 to 688 (SFLS…SRSV). Residues 718–730 (FTMDHSDNSHHLT) show a composition bias toward basic and acidic residues. The segment covering 746–755 (RGLSDASGGL) has biased composition (low complexity). The KH 5 domain occupies 775–839 (NTTVEIRVPA…DQTQAAQNLL (65 aa)).

In terms of assembly, interacts with HUA1. Interacts with FLK and PEP.

The protein localises to the nucleus speckle. Functionally, functions in floral reproductive organ identity in the third whorl and floral determinacy specification by specifically promoting the processing of AGAMOUS (AG) pre-mRNA. Functions in association with HUA1 and HUA2. The chain is KH domain-containing protein HEN4 from Arabidopsis thaliana (Mouse-ear cress).